A 191-amino-acid polypeptide reads, in one-letter code: Protein Ves (191 aa).

The protein belongs to the Ves family.

This chain is Protein Ves, found in Escherichia fergusonii (strain ATCC 35469 / DSM 13698 / CCUG 18766 / IAM 14443 / JCM 21226 / LMG 7866 / NBRC 102419 / NCTC 12128 / CDC 0568-73).